A 932-amino-acid polypeptide reads, in one-letter code: MYCBP-associated protein (932 aa).

Disordered regions lie at residues 1–39 and 165–187; these read MMKK…PVSN and EEPK…PPQH. Basic and acidic residues predominate over residues 165–178; sequence EEPKPKPPKEEERP. Position 559 is a phosphoserine (Ser-559). At Thr-560 the chain carries Phosphothreonine. Phosphoserine is present on Ser-566. Positions 789–886 are disordered; it reads LPDEQGQKSP…TAPSQEPIDP (98 aa). Residues 795 to 806 show a composition bias toward polar residues; it reads QKSPPVTESKVT. Residues 810–869 show a composition bias toward basic and acidic residues; the sequence is AGKEDRRGGAQEKKQLGTKDKDDKRGSKTPGKEDRPNSKKLKPKDDKKVVKSASRDRLLS.

Interacts with MYCBP.

It is found in the cytoplasm. Its subcellular location is the membrane. In terms of biological role, may play a role in spermatogenesis. May be involved in synaptic processes. The chain is MYCBP-associated protein from Mus musculus (Mouse).